A 77-amino-acid chain; its full sequence is Acyl carrier protein (77 aa).

The Carrier domain maps to 2–77 (SNIEERVKKI…AAIDYVSKNQ (76 aa)). Residue Ser37 is modified to O-(pantetheine 4'-phosphoryl)serine.

The protein belongs to the acyl carrier protein (ACP) family. In terms of processing, 4'-phosphopantetheine is transferred from CoA to a specific serine of apo-ACP by AcpS. This modification is essential for activity because fatty acids are bound in thioester linkage to the sulfhydryl of the prosthetic group.

It is found in the cytoplasm. It functions in the pathway lipid metabolism; fatty acid biosynthesis. Carrier of the growing fatty acid chain in fatty acid biosynthesis. This is Acyl carrier protein from Shewanella denitrificans (strain OS217 / ATCC BAA-1090 / DSM 15013).